Consider the following 480-residue polypeptide: Sestrin-2 (480 aa).

Met1 is modified (N-acetylmethionine). The segment at 20 to 43 (RGGVAGPETREEHREGQARRGSRG) is disordered. Over residues 27-37 (ETREEHREGQA) the composition is skewed to basic and acidic residues. The N-terminal domain; mediates the alkylhydroperoxide reductase activity stretch occupies residues 66–239 (GLEALMSSGR…APSPPSEQGT (174 aa)). Cys125 functions as the Cysteine sulfenic acid (-SOH) intermediate in the catalytic mechanism. A Glycyl lysine isopeptide (Lys-Gly) (interchain with G-Cter in ubiquitin) cross-link involves residue Lys175. Disordered stretches follow at residues 221 to 251 (DAEG…NSGG) and 272 to 291 (LLRD…ELEK). Over residues 223–238 (EGSPASQAPSPPSEQG) the composition is skewed to low complexity. A Phosphoserine modification is found at Ser249. The segment at 308 to 480 (PHPDILCFVE…ALRAITRYMT (173 aa)) is C-terminal domain; mediates TORC1 regulation. Residues 374-377 (TYNT), Thr386, and Glu451 contribute to the L-leucine site.

Belongs to the sestrin family. In terms of assembly, interacts with the GATOR2 complex which is composed of MIOS, SEC13, SEH1L, WDR24 and WDR59; the interaction is negatively regulated by leucine. Conveys leucine availability via direct interaction with SEH1L and WDR24 components of the GATOR2 complex. Interacts with RRAGA, RRAGB, RRAGC and RRAGD; may function as a guanine nucleotide dissociation inhibitor for RRAGs and regulate them. May interact with the TORC2 complex. Interacts with KEAP1, RBX1, SQSTM and ULK1; to regulate the degradation of KEAP1. May also associate with the complex composed of TSC1, TSC2 and the AMP-responsive protein kinase/AMPK to regulate TORC1 signaling. May interact with PRDX1. Post-translationally, phosphorylated by ULK1 at multiple sites. Ubiquitinated at Lys-175 by RNF167 via 'Lys-63'-linked polyubiquitination in response to leucine deprivation: ubiquitination promotes SESN2-interaction with the GATOR2 complex, leading to inhibit the TORC1 signaling pathway. Deubiquitinated at Lys-175 by STAMBPL1, promoting the TORC1 signaling pathway. Ubiquitinated by RNF186; ubiquitination mediates proteasomal degradation. Detected in heart, liver and skeletal muscles (at protein level).

It is found in the cytoplasm. The enzyme catalyses a hydroperoxide + L-cysteinyl-[protein] = S-hydroxy-L-cysteinyl-[protein] + an alcohol. Functionally, functions as an intracellular leucine sensor that negatively regulates the mTORC1 signaling pathway through the GATOR complex. In absence of leucine, binds the GATOR subcomplex GATOR2 and prevents mTORC1 signaling. Binding of leucine to SESN2 disrupts its interaction with GATOR2 thereby activating the TORC1 signaling pathway. This stress-inducible metabolic regulator also plays a role in protection against oxidative and genotoxic stresses. May negatively regulate protein translation in response to endoplasmic reticulum stress, via mTORC1. May positively regulate the transcription by NFE2L2 of genes involved in the response to oxidative stress by facilitating the SQSTM1-mediated autophagic degradation of KEAP1. May also mediate TP53 inhibition of TORC1 signaling upon genotoxic stress. Moreover, may prevent the accumulation of reactive oxygen species (ROS) through the alkylhydroperoxide reductase activity born by the N-terminal domain of the protein. Was originally reported to contribute to oxidative stress resistance by reducing PRDX1. However, this could not be confirmed. This is Sestrin-2 from Mus musculus (Mouse).